Consider the following 101-residue polypeptide: Small ribosomal subunit protein uS14 (101 aa).

It belongs to the universal ribosomal protein uS14 family. In terms of assembly, part of the 30S ribosomal subunit. Contacts proteins S3 and S10.

Functionally, binds 16S rRNA, required for the assembly of 30S particles and may also be responsible for determining the conformation of the 16S rRNA at the A site. The sequence is that of Small ribosomal subunit protein uS14 from Methylorubrum extorquens (strain PA1) (Methylobacterium extorquens).